Here is a 347-residue protein sequence, read N- to C-terminus: Spermidine/putrescine import ATP-binding protein PotA (347 aa).

An ABC transporter domain is found at 6 to 238; the sequence is LEIKNLSHYY…PKTKFVADFI (233 aa). ATP is bound at residue 40-47; the sequence is GPSGCGKT.

Belongs to the ABC transporter superfamily. Spermidine/putrescine importer (TC 3.A.1.11.1) family. In terms of assembly, the complex is composed of two ATP-binding proteins (PotA), two transmembrane proteins (PotB and PotC) and a solute-binding protein (PotD).

Its subcellular location is the cell inner membrane. It catalyses the reaction ATP + H2O + polyamine-[polyamine-binding protein]Side 1 = ADP + phosphate + polyamineSide 2 + [polyamine-binding protein]Side 1.. In terms of biological role, part of the ABC transporter complex PotABCD involved in spermidine/putrescine import. Responsible for energy coupling to the transport system. This Borreliella afzelii (strain PKo) (Borrelia afzelii) protein is Spermidine/putrescine import ATP-binding protein PotA.